Reading from the N-terminus, the 364-residue chain is Adenine deaminase (364 aa).

Histidine 25, histidine 27, and histidine 221 together coordinate Zn(2+). The Proton donor role is filled by glutamate 224. Position 301 (aspartate 301) interacts with Zn(2+). Aspartate 302 is a binding site for substrate.

Belongs to the metallo-dependent hydrolases superfamily. Adenosine and AMP deaminases family. Adenine deaminase type 2 subfamily. Zn(2+) is required as a cofactor.

It is found in the cytoplasm. The protein resides in the nucleus. It carries out the reaction adenine + H2O + H(+) = hypoxanthine + NH4(+). Functionally, catalyzes the hydrolytic deamination of adenine to hypoxanthine. Plays an important role in the purine salvage pathway and in nitrogen catabolism. Has no activity with adenosine as a substrate. The polypeptide is Adenine deaminase (aah1) (Emericella nidulans (strain FGSC A4 / ATCC 38163 / CBS 112.46 / NRRL 194 / M139) (Aspergillus nidulans)).